A 459-amino-acid polypeptide reads, in one-letter code: MAPLRPLLMLALLAWVALADQESCKGRCTDGFIAERKCQCDELCSYYQSCCTDYVAECKPQVTRGDVFLQPDDEYRAYDYHEETRHNTSVQEEQRIPVLLAKTEETPVLKPEEEAPPPGPQTDDLGVPEEELCSGKPFDAFTNLKNGSVFAFRGLYCYELDEKAVRPGYPKLIQDVWGIKGPIDAAFTRINCQGKTYLFKGSQYWRFDDGVLDPNYPREISEGFKGIPDDVDAALALPAHSYSGRERVYFFKGKQYWEYVFQQQPSREECEGSSPSDVFAHFALMQRDSWEDIFRLLFWSHSFGGAIEPRVISQDWLGLPEQVDAAMAGQIYISGSALKPSQPKMTKSARRSGKRYRSRRGRGRGRGHSRSQKSHRQSRSTWLPWFSSEETGPGGYNYDDYKMDWLVPATCEPIQSVYFFSGEEYYRVNLRTQRVDTVTPPYPRSIAQYWLGCPVPDQK.

The first 19 residues, 1–19, serve as a signal peptide directing secretion; that stretch reads MAPLRPLLMLALLAWVALA. Residues 20–63 form the SMB domain; the sequence is DQESCKGRCTDGFIAERKCQCDELCSYYQSCCTDYVAECKPQVT. Cystine bridges form between Cys-24-Cys-28, Cys-24-Cys-40, Cys-28-Cys-58, Cys-38-Cys-40, Cys-38-Cys-51, Cys-44-Cys-50, and Cys-51-Cys-58. The short motif at 64–66 is the Cell attachment site element; it reads RGD. Sulfotyrosine occurs at positions 75, 78, and 80. Residues Asn-87 and Asn-146 are each glycosylated (N-linked (GlcNAc...) asparagine). Hemopexin repeat units follow at residues 135–179, 180–227, and 228–285; these read GKPF…VWGI, KGPI…FKGI, and PDDV…FALM. Phosphoserine is present on residues Ser-289 and Ser-378. The tract at residues 338–380 is disordered; it reads LKPSQPKMTKSARRSGKRYRSRRGRGRGRGHSRSQKSHRQSRS. A compositionally biased stretch (basic residues) spans 347 to 378; it reads KSARRSGKRYRSRRGRGRGRGHSRSQKSHRQS. A sulfotyrosine mark is found at Tyr-398 and Tyr-401. Residues 400–453 form a Hemopexin 4 repeat; it reads DYKMDWLVPATCEPIQSVYFFSGEEYYRVNLRTQRVDTVTPPYPRSIAQYWLGC.

Monomer. Interacts with SERPINE1/PAI1 and C1QBP. Sulfated on tyrosine residues. In terms of processing, N- and O-glycosylated. Post-translationally, it has been suggested that the active SMB domain may be permitted considerable disulfide bond heterogeneity or variability, thus two alternate disulfide patterns based on 3D structures are described with 1 disulfide bond conserved in both. Plasma.

Its subcellular location is the secreted. The protein resides in the extracellular space. Its function is as follows. Vitronectin is a cell adhesion and spreading factor found in serum and tissues. Vitronectin interact with glycosaminoglycans and proteoglycans. Is recognized by certain members of the integrin family and serves as a cell-to-substrate adhesion molecule. Inhibitor of the membrane-damaging effect of the terminal cytolytic complement pathway. In Sus scrofa (Pig), this protein is Vitronectin (VTN).